The primary structure comprises 40 residues: Cytochrome c3 hydrogenase small chain (40 aa).

Fe cation serves as cofactor.

It carries out the reaction 2 Fe(III)-[cytochrome c3] + H2 = 2 Fe(II)-[cytochrome c3] + 2 H(+). The protein is Cytochrome c3 hydrogenase small chain (hoxK) of Acidithiobacillus ferrooxidans (Thiobacillus ferrooxidans).